Here is a 3032-residue protein sequence, read N- to C-terminus: DmX-like protein 2 (3032 aa).

WD repeat units follow at residues 108–145, 167–207, and 230–278; these read FLSS…ILEE, KTSV…KSSI, and AHPR…EDCL. S326 carries the post-translational modification Phosphoserine. Positions 418–486 are disordered; the sequence is QLDHESDDAD…HPRPSISMPL (69 aa). The segment covering 422–434 has biased composition (acidic residues); the sequence is ESDDADREDEERS. Over residues 435-474 the composition is skewed to basic and acidic residues; it reads QDERERGLRMKLDHELSLDRESEAGTGSSEHEDGEREGSP. Position 473 is a phosphoserine (S473). Residues 492–532 form a WD 4 repeat; the sequence is DRKIETLLTEWNKNPDMLFTIHPVDGTFLVWHVKYLDEYNP. Residues 577-598 form a disordered region; it reads PSQQEMMSVDSPHGSQLHSPSH. The residue at position 587 (S587) is a Phosphoserine. Over residues 589–598 the composition is skewed to polar residues; it reads HGSQLHSPSH. WD repeat units lie at residues 594–633, 750–802, and 879–921; these read HSPS…KSAF, LHTS…RKLL, and QPSQ…VQAC. The tract at residues 937–958 is disordered; that stretch reads VPGQKNLDSSPETSSSMSSVPH. Phosphoserine is present on residues S945 and S946. Over residues 945–958 the composition is skewed to low complexity; sequence SSPETSSSMSSVPH. Residues 1001-1038 form a WD 8 repeat; the sequence is LSSSSIYPVCLAPYLVVTTCSDNKVRFWKCCMETNSLG. Phosphoserine occurs at positions 1141, 1144, and 1152. WD repeat units follow at residues 1164–1205 and 1245–1285; these read PNIK…VSDQ and GTPS…GNVD. A phosphoserine mark is found at S1288 and S1399. Position 1416 is a phosphothreonine (T1416). The interval 1443–1464 is disordered; sequence RISEDSTKKPQSYEDHIESQSE. Residues 1444-1461 are compositionally biased toward basic and acidic residues; that stretch reads ISEDSTKKPQSYEDHIES. Residue S1856 is modified to Phosphoserine. Positions 1922–1953 are disordered; sequence QLDSVSGRMENGPSESKPVSRSDGGSGADWSA. Phosphothreonine is present on T2017. Positions 2117–2146 form a coiled coil; sequence GSYERHQIERRRLQAKREHAERRKLWLQKN. Phosphoserine occurs at positions 2394 and 2636. Low complexity predominate over residues 2722-2732; that stretch reads QPGAASHSSSQ. The disordered stretch occupies residues 2722–2744; sequence QPGAASHSSSQPHPPPSLPWLGS. 6 WD repeats span residues 2757-2796, 2800-2839, 2846-2888, 2894-2933, 2936-2975, and 2988-3026; these read RNLH…QLVC, AGNA…SNPK, CHSK…GNSL, CHDH…LIHT, AHDS…LIHS, and NIGA…NIPN.

Interacts with MADD and RAB3GAP. Expressed in the brain and pituitary gland. Detected in the hippocampus, dentate gyrus, hypothalamus, pyriform cortex and the granular and molecular layers of the cerebellum of adult animals. In the hypothalamus, expression is observed in the arcuate nucleus, the ME, the organum vasculosum of the lamina terminalis, and the subfornical organ, the subcommissural organ, and the suprachiasmatic nucleus. Both tanycytes and hypothalamic neurosecretory neurons express the protein. Expressed in the inner and outer hair cells as well as in the spiral ganglion neurons. Expressed in insulin-secreting cells of the islets of Langerhans in the pancreas.

It localises to the cytoplasmic vesicle. The protein resides in the secretory vesicle. Its subcellular location is the synaptic vesicle membrane. The protein localises to the neuronal dense core vesicle. Its function is as follows. May serve as a scaffold protein for MADD and RAB3GA on synaptic vesicles of neuronal and endocrine homeostatic processes. Plays a role in the brain as a key controller of neuronal and endocrine homeostatic processes. This chain is DmX-like protein 2 (Dmxl2), found in Mus musculus (Mouse).